A 677-amino-acid polypeptide reads, in one-letter code: UvrABC system protein B (677 aa).

A Helicase ATP-binding domain is found at 25–412 (QGVNGGERYQ…GGEVAQQVIR (388 aa)). 38–45 (GATGTGKT) is an ATP binding site. The Beta-hairpin signature appears at 91-114 (YYDYYQPEAYVPVSDTYIAKTASI). In terms of domain architecture, Helicase C-terminal spans 429–591 (QVDDLLGEIR…IVPTAAGKKA (163 aa)). One can recognise a UVR domain in the interval 639–674 (PELIDQLEGKMKEAAKKLDFEDAANLRDRIKQLRQK).

The protein belongs to the UvrB family. Forms a heterotetramer with UvrA during the search for lesions. Interacts with UvrC in an incision complex.

It localises to the cytoplasm. The UvrABC repair system catalyzes the recognition and processing of DNA lesions. A damage recognition complex composed of 2 UvrA and 2 UvrB subunits scans DNA for abnormalities. Upon binding of the UvrA(2)B(2) complex to a putative damaged site, the DNA wraps around one UvrB monomer. DNA wrap is dependent on ATP binding by UvrB and probably causes local melting of the DNA helix, facilitating insertion of UvrB beta-hairpin between the DNA strands. Then UvrB probes one DNA strand for the presence of a lesion. If a lesion is found the UvrA subunits dissociate and the UvrB-DNA preincision complex is formed. This complex is subsequently bound by UvrC and the second UvrB is released. If no lesion is found, the DNA wraps around the other UvrB subunit that will check the other stand for damage. This chain is UvrABC system protein B, found in Parasynechococcus marenigrum (strain WH8102).